The primary structure comprises 287 residues: Protease HtpX (287 aa).

The next 2 helical transmembrane spans lie at 4–24 and 33–53; these read VFLLIATNLAILLVASIVMSI and GGLLVFAAIFGFGGSFISLAI. His-139 lines the Zn(2+) pocket. Residue Glu-140 is part of the active site. His-143 is a Zn(2+) binding site. Transmembrane regions (helical) follow at residues 154–174 and 195–215; these read LIQGVVNTFVIFAARVVAGII and GVVFVLDMLFGILASIIVAYF. Residue Glu-220 coordinates Zn(2+).

Belongs to the peptidase M48B family. The cofactor is Zn(2+).

The protein resides in the cell inner membrane. The protein is Protease HtpX of Shewanella denitrificans (strain OS217 / ATCC BAA-1090 / DSM 15013).